The following is a 436-amino-acid chain: Adenylosuccinate synthetase (436 aa).

GTP is bound by residues 13-19 (GDEGKGK) and 41-43 (GHT). Asp14 (proton acceptor) is an active-site residue. Asp14 and Gly41 together coordinate Mg(2+). IMP is bound by residues 14–17 (DEGK), 39–42 (NAGH), Thr130, Arg144, Gln225, Thr240, and Arg304. His42 serves as the catalytic Proton donor. A substrate-binding site is contributed by 300–306 (ATTGRSR). GTP-binding positions include Arg306, 332 to 334 (KLD), and 415 to 417 (STG).

Belongs to the adenylosuccinate synthetase family. In terms of assembly, homodimer. It depends on Mg(2+) as a cofactor.

Its subcellular location is the cytoplasm. It catalyses the reaction IMP + L-aspartate + GTP = N(6)-(1,2-dicarboxyethyl)-AMP + GDP + phosphate + 2 H(+). The protein operates within purine metabolism; AMP biosynthesis via de novo pathway; AMP from IMP: step 1/2. In terms of biological role, plays an important role in the de novo pathway of purine nucleotide biosynthesis. Catalyzes the first committed step in the biosynthesis of AMP from IMP. This chain is Adenylosuccinate synthetase, found in Hamiltonella defensa subsp. Acyrthosiphon pisum (strain 5AT).